We begin with the raw amino-acid sequence, 333 residues long: 1,5-anhydro-D-fructose reductase (333 aa).

NADP(+) is bound by residues 9–12, 33–34, R38, 71–76, 93–94, N120, 162–163, and Y283; these read ASTI, ST, TTNELH, EK, and WR.

As to quaternary structure, monomer.

It carries out the reaction 1,5-anhydro-D-mannitol + NADP(+) = 1,5-anhydro-D-fructose + NADPH + H(+). In terms of biological role, catalyzes the NADPH-specific reduction of 1,5-anhydro-D-fructose to 1,5-anhydro-D-mannitol. Also shows some activity against structurally related compounds such as 3-keto-1,5-anhydro-D-fructose, D-glucosone and D-xylosone. The enzyme cannot use NADH as cosubstrate. The chain is 1,5-anhydro-D-fructose reductase (afr) from Ensifer adhaerens (Sinorhizobium morelense).